The following is a 454-amino-acid chain: tRNA modification GTPase MnmE (454 aa).

Positions 23, 80, and 120 each coordinate (6S)-5-formyl-5,6,7,8-tetrahydrofolate. A TrmE-type G domain is found at 216–377 (TIKIVIAGPP…LKNKILEITT (162 aa)). K(+) is bound at residue asparagine 226. Residues 226 to 231 (NVGKSS), 245 to 251 (TNIPGTT), and 270 to 273 (DTAG) each bind GTP. Serine 230 serves as a coordination point for Mg(2+). K(+) is bound by residues threonine 245, isoleucine 247, and threonine 250. Threonine 251 is a Mg(2+) binding site. Residue lysine 454 participates in (6S)-5-formyl-5,6,7,8-tetrahydrofolate binding.

Belongs to the TRAFAC class TrmE-Era-EngA-EngB-Septin-like GTPase superfamily. TrmE GTPase family. In terms of assembly, homodimer. Heterotetramer of two MnmE and two MnmG subunits. K(+) is required as a cofactor.

Its subcellular location is the cytoplasm. In terms of biological role, exhibits a very high intrinsic GTPase hydrolysis rate. Involved in the addition of a carboxymethylaminomethyl (cmnm) group at the wobble position (U34) of certain tRNAs, forming tRNA-cmnm(5)s(2)U34. In Buchnera aphidicola subsp. Cinara cedri (strain Cc), this protein is tRNA modification GTPase MnmE.